A 256-amino-acid polypeptide reads, in one-letter code: Transcription factor BHLH094 (256 aa).

Residues 1 to 125 form a disordered region; sequence MDPAPSLAAE…TPPEPPKQDY (125 aa). Positions 79–97 are enriched in basic and acidic residues; the sequence is PEAKRLKPMKSSDKNDSLR. The segment at 134–147 is basic motif; degenerate; the sequence is QATDSHSLAERARR. The bHLH domain maps to 134–184; it reads QATDSHSLAERARREKISERMKILQDLVPGCNKVIGKASVLDEIINYIQSL. Positions 148 to 184 are helix-loop-helix motif; the sequence is EKISERMKILQDLVPGCNKVIGKASVLDEIINYIQSL.

It belongs to the bHLH protein family. As to quaternary structure, interacts with RSS3. Forms a ternary complex with RSS3 and TIFY11A/JAZ9 in the nucleus.

It localises to the nucleus. Transcription factor that forms a ternary complex with RSS3 and TIFY11A/JAZ9 to negatively regulate jasmonate-responsive genes. The protein is Transcription factor BHLH094 of Oryza sativa subsp. japonica (Rice).